The primary structure comprises 262 residues: (2Z,6E)-farnesyl diphosphate synthase (262 aa).

The active site involves Asp40. Asp40 is a Mg(2+) binding site. Substrate contacts are provided by residues 41–44 (GNRR), Trp45, and 86–88 (STE). Catalysis depends on Asn89, which acts as the Proton acceptor. Substrate contacts are provided by residues Arg92, Arg211, and 217-219 (RLS). A Mg(2+)-binding site is contributed by Glu230.

This sequence belongs to the UPP synthase family. Z-FPP synthase subfamily. In terms of assembly, homodimer. Mg(2+) serves as cofactor.

It is found in the cytoplasm. It localises to the cell membrane. The enzyme catalyses isopentenyl diphosphate + (2E)-geranyl diphosphate = (2Z,6E)-farnesyl diphosphate + diphosphate. In terms of biological role, catalyzes the condensation of only one isopentenyl pyrophosphate (IPP) unit in the cis configuration to E-geranyl diphosphate (E-GPP) generating the 15 carbon product (2Z,6E)-farnesyl diphosphate (Z-FPP or EZ-FPP). Z-FPP is the precursor of decaprenyl diphosphate, which has a central role in the biosynthesis of the mycobacterial cell wall. The sequence is that of (2Z,6E)-farnesyl diphosphate synthase from Mycobacterium tuberculosis (strain CDC 1551 / Oshkosh).